Consider the following 1388-residue polypeptide: Rho-associated protein kinase 2 (1388 aa).

Residues 1 to 24 (MSRPPPTGKMPGAPEAVSGDGAGA) are disordered. Residues 92 to 354 (YDVVKVIGRG…VEEIKQHPFF (263 aa)) enclose the Protein kinase domain. Residues 98-106 (IGRGAFGEV) and Lys121 each bind ATP. Asp214 serves as the catalytic Proton acceptor. Positions 357–425 (DQWNWDNIRE…YRENLLLSDS (69 aa)) constitute an AGC-kinase C-terminal domain. The interaction with PPP1R12A stretch occupies residues 363–784 (NIRETAAPVV…INELLKQKDV (422 aa)). Residues 373–420 (PELSSDIDSSNFDDIEDDKGDVETFPIPKAFVGNQLPFIGFTYYRENL) form an interaction with NPM1 region. Phosphothreonine; by ROCK2 is present on Thr414. Coiled-coil stretches lie at residues 439–1025 (NEES…KQLL) and 1053–1131 (DTDV…IGLD). Positions 497–573 (TLRQLEREKA…LDETNALLRT (77 aa)) constitute an REM-1 domain. Residues 512-530 (NAEYQRKADHEADKKRNLE) show a composition bias toward basic and acidic residues. Residues 512–532 (NAEYQRKADHEADKKRNLEND) are disordered. Tyr722 is subject to Phosphotyrosine; by SRC. The 69-residue stretch at 979-1047 (TSDVANLANE…LAEIMNRKEP (69 aa)) folds into the RhoBD domain. The tract at residues 979–1047 (TSDVANLANE…LAEIMNRKEP (69 aa)) is RHOA binding. Phosphoserine is present on Ser1137. A PH domain is found at 1150–1349 (ESRLEGWLSL…WVSRLVKKIP (200 aa)). At Thr1212 the chain carries Phosphothreonine. The Phorbol-ester/DAG-type zinc-finger motif lies at 1260–1315 (GHEFIPTLYHFPTNCEACMKPLWHMFKPPPALECRRCHIKCHKDHMDKKEEIIAPC). Positions 1345 to 1388 (VKKIPKKPPAPDPFARSSPRTSMKIQQNQSIRRPSRQLAPNKPS) are disordered. Phosphoserine is present on residues Ser1362 and Ser1374. Polar residues predominate over residues 1362-1376 (SPRTSMKIQQNQSIR).

It belongs to the protein kinase superfamily. AGC Ser/Thr protein kinase family. Homodimer. Interacts with IRS1. Interacts with RAF1. Interacts with RHOA (activated by GTP). Interacts with RHOB and RHOC. Interacts with PPP1R12A. Interacts with EP300. Interacts with CHORDC1. Interacts with BRCA2. Interacts with NPM1; this interaction enhances ROCK2 activity. Interacts with SORL1. Interacts with PJVK. The cofactor is Mg(2+). Post-translationally, autophosphorylated. Phosphorylation at Tyr-722 reduces its binding to RHOA and is crucial for focal adhesion dynamics. Dephosphorylation by PTPN11 stimulates its RHOA binding activity. Cleaved by granzyme B during apoptosis. This leads to constitutive activation of the kinase and membrane blebbing. Highly expressed in whole brain and in cerebellum, and at lower levels in heart and lung. Detected at low levels in skeletal muscle, spleen, liver, kidney and pancreas.

The protein resides in the cytoplasm. The protein localises to the cell membrane. It localises to the nucleus. Its subcellular location is the cytoskeleton. It is found in the microtubule organizing center. The protein resides in the centrosome. The enzyme catalyses L-seryl-[protein] + ATP = O-phospho-L-seryl-[protein] + ADP + H(+). It catalyses the reaction L-threonyl-[protein] + ATP = O-phospho-L-threonyl-[protein] + ADP + H(+). Its activity is regulated as follows. Activated by RHOA binding. Inhibited by Y-27632. Its function is as follows. Protein kinase which is a key regulator of actin cytoskeleton and cell polarity. Involved in regulation of smooth muscle contraction, actin cytoskeleton organization, stress fiber and focal adhesion formation, neurite retraction, cell adhesion and motility via phosphorylation of ADD1, BRCA2, CNN1, EZR, DPYSL2, EP300, MSN, MYL9/MLC2, NPM1, RDX, PPP1R12A and VIM. Phosphorylates SORL1 and IRF4. Acts as a negative regulator of VEGF-induced angiogenic endothelial cell activation. Positively regulates the activation of p42/MAPK1-p44/MAPK3 and of p90RSK/RPS6KA1 during myogenic differentiation. Plays an important role in the timely initiation of centrosome duplication. Inhibits keratinocyte terminal differentiation. May regulate closure of the eyelids and ventral body wall through organization of actomyosin bundles. Plays a critical role in the regulation of spine and synaptic properties in the hippocampus. Plays an important role in generating the circadian rhythm of the aortic myofilament Ca(2+) sensitivity and vascular contractility by modulating the myosin light chain phosphorylation. This Bos taurus (Bovine) protein is Rho-associated protein kinase 2 (ROCK2).